The sequence spans 461 residues: Cytochrome c biogenesis protein CcsB (461 aa).

Helical transmembrane passes span 32 to 52 (LRLA…GTVI), 91 to 111 (TWWF…CTFT), and 178 to 198 (IGPI…IWGA).

The protein belongs to the Ccs1/CcsB family. As to quaternary structure, may interact with CcsA.

The protein resides in the cellular thylakoid membrane. Required during biogenesis of c-type cytochromes (cytochrome c6 and cytochrome f) at the step of heme attachment. The polypeptide is Cytochrome c biogenesis protein CcsB (Nostoc sp. (strain PCC 7120 / SAG 25.82 / UTEX 2576)).